The sequence spans 405 residues: LanC-like protein GCL2 (405 aa).

Zn(2+) contacts are provided by C278, C323, and H324.

Belongs to the LanC-like protein family.

Its function is as follows. May play a role in signaling. May be not involved in abscisic acid (ABA) signaling. The chain is LanC-like protein GCL2 (GCL2) from Arabidopsis thaliana (Mouse-ear cress).